A 440-amino-acid polypeptide reads, in one-letter code: FAD-dependent monooxygenase FVEG_08293 (440 aa).

A helical membrane pass occupies residues 7-26; sequence EFNVAIVGAGVAGLALAMAL. Residues Glu37 and Gly50 each contribute to the FAD site. Residue Asn77 is glycosylated (N-linked (GlcNAc...) asparagine). Arg122 contacts FAD. Catalysis depends on residues Arg203 and Tyr235. Residues Asp317 and Ala330 each coordinate FAD.

This sequence belongs to the paxM FAD-dependent monooxygenase family. FAD is required as a cofactor.

The protein resides in the membrane. Its function is as follows. FAD-dependent monooxygenase; part of the Fusarium detoxification of benzoxazolinone cluster 1 (FDB1) involved in the degradation of benzoxazolinones produced by the host plant. Maize, wheat, and rye produce the 2 benzoxazinone phytoanticipins 2,4-dihy-droxy-7-methoxy-1,4-benzoxazin-3-one (DIMBOA) and 2,4-dihydroxy-1,4-benzoxazin-3-one (DIBOA) that, due to their inherent instability once released, spontaneously degrade to the more stable corresponding benzoxazolinones, 6-methoxy-2-benzoxazolinone (MBOA) and 2-benzoxazolinone (BOA), respectively. The first step in the detoxification of benzoxazolinones involves the hydrolysis of the cyclic ester bond of benzoxazolinones by the FDB1 cluster gamma-lactamase MBL1 to aminophenols. MBL1 is able to convert BOA into 2-aminophenol (2-AP), as well as MBOA into 5-methoxy-2-aminophenol (2-AMP). The FDB2 cluster N-malonyltransferase FDB2/NAT1 then metabolizes aminophenols via N-malonylation to non-toxic malonamic acids. FDB2/NAT1 converts 2-AP into N-(2-hydroxyphenyl) malonamic acid (HPMA) and 2-AMP into N-(2-hydroxy-4-methoxyphenyl) malonamic acid (HMPMA). The duplicated dienlactone hydrolases DLH1 and DLH2 may provide redundant function for hydrolyzing the lactone moiety in the BOA molecule. The roles of the amidases an other enzymes encoded by the 2 FDB clusters have not been identified so far. This is FAD-dependent monooxygenase FVEG_08293 from Gibberella moniliformis (strain M3125 / FGSC 7600) (Maize ear and stalk rot fungus).